The primary structure comprises 87 residues: MENDKGQLVELYVPRKCSATNRIIKADDHASVQINVAKVDEEGRAIPGEYITYALSGYVRSRGESDDSLNRLAQNDGLLKNVWSYSR.

At Met-1 the chain carries N-acetylmethionine.

The protein belongs to the eukaryotic ribosomal protein eS21 family. As to quaternary structure, component of the small ribosomal subunit (SSU). Mature yeast ribosomes consist of a small (40S) and a large (60S) subunit. The 40S small subunit contains 1 molecule of ribosomal RNA (18S rRNA) and 33 different proteins (encoded by 57 genes). The large 60S subunit contains 3 rRNA molecules (25S, 5.8S and 5S rRNA) and 46 different proteins (encoded by 81 genes). In terms of processing, N-terminally acetylated by acetyltransferase NatB.

The protein resides in the cytoplasm. Component of the ribosome, a large ribonucleoprotein complex responsible for the synthesis of proteins in the cell. The small ribosomal subunit (SSU) binds messenger RNAs (mRNAs) and translates the encoded message by selecting cognate aminoacyl-transfer RNA (tRNA) molecules. The large subunit (LSU) contains the ribosomal catalytic site termed the peptidyl transferase center (PTC), which catalyzes the formation of peptide bonds, thereby polymerizing the amino acids delivered by tRNAs into a polypeptide chain. The nascent polypeptides leave the ribosome through a tunnel in the LSU and interact with protein factors that function in enzymatic processing, targeting, and the membrane insertion of nascent chains at the exit of the ribosomal tunnel. eS21 is required for the processing of the 20S rRNA-precursor to mature 18S rRNA in a late step of the maturation of 40S ribosomal subunits. Has a physiological role leading to 18S rRNA stability. The polypeptide is Small ribosomal subunit protein eS21B (Saccharomyces cerevisiae (strain ATCC 204508 / S288c) (Baker's yeast)).